A 172-amino-acid polypeptide reads, in one-letter code: Stellate protein CG33243 (172 aa).

The protein belongs to the casein kinase 2 subunit beta family. In terms of assembly, interacts in vitro with the casein kinase 2 alpha subunit (CkII-alpha). The relevance of such interaction is however unclear in vivo. In terms of tissue distribution, probably not expressed in wild-type flies. In males lacking the Y chromosome, it is testis-specific and constitutes the main component of star-shaped crystals.

Functionally, unknown. In males lacking the Y chromosome, its strong overexpression leads to the appearance of proteinaceous star-shaped crystals in the primary spermatocytes causing meiotic drive, possibly by interfering with normal casein kinase 2 activity. This Drosophila melanogaster (Fruit fly) protein is Stellate protein CG33243 (Ste:CG33243).